Reading from the N-terminus, the 158-residue chain is Transcription elongation factor GreA (158 aa).

This sequence belongs to the GreA/GreB family.

In terms of biological role, necessary for efficient RNA polymerase transcription elongation past template-encoded arresting sites. The arresting sites in DNA have the property of trapping a certain fraction of elongating RNA polymerases that pass through, resulting in locked ternary complexes. Cleavage of the nascent transcript by cleavage factors such as GreA or GreB allows the resumption of elongation from the new 3'terminus. GreA releases sequences of 2 to 3 nucleotides. The protein is Transcription elongation factor GreA of Psychrobacter cryohalolentis (strain ATCC BAA-1226 / DSM 17306 / VKM B-2378 / K5).